The sequence spans 150 residues: Large ribosomal subunit protein bL9 (150 aa).

The protein belongs to the bacterial ribosomal protein bL9 family.

Functionally, binds to the 23S rRNA. In Streptococcus agalactiae serotype Ia (strain ATCC 27591 / A909 / CDC SS700), this protein is Large ribosomal subunit protein bL9.